Here is a 290-residue protein sequence, read N- to C-terminus: Probable ECF RNA polymerase sigma factor SigI (290 aa).

Positions tryptophan 11–serine 74 are sigma-70 factor domain-2. Positions aspartate 34–glutamine 37 match the Polymerase core binding motif. The sigma-70 factor domain-4_2 stretch occupies residues leucine 110–isoleucine 162. Positions tyrosine 137–histidine 156 form a DNA-binding region, H-T-H motif.

This sequence belongs to the sigma-70 factor family. ECF subfamily. In terms of assembly, interacts transiently with the RNA polymerase catalytic core formed by RpoA, RpoB, RpoC and RpoZ (2 alpha, 1 beta, 1 beta' and 1 omega subunit) to form the RNA polymerase holoenzyme that can initiate transcription.

In terms of biological role, sigma factors are initiation factors that promote the attachment of RNA polymerase to specific initiation sites and are then released. Extracytoplasmic function (ECF) sigma factors are held in an inactive form by a cognate anti-sigma factor until released, although no anti-sigma factor is known for this protein. In Mycobacterium tuberculosis (strain CDC 1551 / Oshkosh), this protein is Probable ECF RNA polymerase sigma factor SigI (sigI).